Here is a 495-residue protein sequence, read N- to C-terminus: Lysine--tRNA ligase (495 aa).

The Mg(2+) site is built by E406 and E413.

Belongs to the class-II aminoacyl-tRNA synthetase family. Homodimer. It depends on Mg(2+) as a cofactor.

Its subcellular location is the cytoplasm. It catalyses the reaction tRNA(Lys) + L-lysine + ATP = L-lysyl-tRNA(Lys) + AMP + diphosphate. The polypeptide is Lysine--tRNA ligase (Staphylococcus epidermidis (strain ATCC 35984 / DSM 28319 / BCRC 17069 / CCUG 31568 / BM 3577 / RP62A)).